A 207-amino-acid polypeptide reads, in one-letter code: Large ribosomal subunit protein uL4 (207 aa).

A disordered region spans residues 47–78 (GTASSKTRAEVRGGGKKPWRQKGTGRARVGSS). Residues 60–71 (GGKKPWRQKGTG) are compositionally biased toward basic residues.

The protein belongs to the universal ribosomal protein uL4 family. Part of the 50S ribosomal subunit.

Its function is as follows. One of the primary rRNA binding proteins, this protein initially binds near the 5'-end of the 23S rRNA. It is important during the early stages of 50S assembly. It makes multiple contacts with different domains of the 23S rRNA in the assembled 50S subunit and ribosome. Functionally, forms part of the polypeptide exit tunnel. The protein is Large ribosomal subunit protein uL4 of Syntrophomonas wolfei subsp. wolfei (strain DSM 2245B / Goettingen).